The sequence spans 340 residues: Immunoglobulin-binding protein 1 (340 aa).

The UIM domain maps to Leu47–Asp61. Positions Arg99–Gly203 are interaction with PPP2CA. Disordered stretches follow at residues Asp221 to Lys242 and Leu281 to Gly340. The interval Arg226–Ser291 is interaction with MID1. An N6-acetyllysine modification is found at Lys242. Residues Ala292 to Gln301 are compositionally biased toward low complexity. The span at Glu302 to Glu312 shows a compositional bias: acidic residues. Positions Glu313–Pro330 are enriched in basic and acidic residues.

The protein belongs to the IGBP1/TAP42 family. As to quaternary structure, interacts with partially folded PPP2CA, but not with the fully active protein. Interacts with PPP2CB, and with PP4 and PP6. Interacts with MID1 and MID2. Interacts with ubiquitin. In terms of processing, phosphorylated. Monoubiquitination by MID1 triggers calpain-mediated cleavage and switches IGBP1 activity from protective to destructive.

Its subcellular location is the cytoplasm. Associated to surface IgM-receptor; may be involved in signal transduction. Involved in regulation of the catalytic activity of the phosphatases PP2A, PP4 and PP6 by protecting their partially folded catalytic subunits from degradative polyubiquitination until they associate with regulatory subunits. This chain is Immunoglobulin-binding protein 1 (Igbp1), found in Rattus norvegicus (Rat).